Consider the following 545-residue polypeptide: CTP synthase (545 aa).

The segment at 1–266 (MTKNYIFITG…DDYICNYFKL (266 aa)) is amidoligase domain. Serine 14 provides a ligand contact to CTP. A UTP-binding site is contributed by serine 14. ATP-binding positions include 15–20 (SLGKGI) and aspartate 72. Mg(2+) is bound by residues aspartate 72 and glutamate 140. Residues 147–149 (DIE), 187–192 (KTKPTQ), and lysine 223 each bind CTP. UTP is bound by residues 187 to 192 (KTKPTQ) and lysine 223. 239 to 241 (KDV) contacts ATP. One can recognise a Glutamine amidotransferase type-1 domain in the interval 291 to 543 (VIGIIGKYIK…IKSAGKHKKN (253 aa)). Residue glycine 352 coordinates L-glutamine. Residue cysteine 379 is the Nucleophile; for glutamine hydrolysis of the active site. L-glutamine-binding positions include 380-383 (LGMQ), glutamate 403, and arginine 471. Residues histidine 516 and glutamate 518 contribute to the active site.

This sequence belongs to the CTP synthase family. As to quaternary structure, homotetramer.

It carries out the reaction UTP + L-glutamine + ATP + H2O = CTP + L-glutamate + ADP + phosphate + 2 H(+). The enzyme catalyses L-glutamine + H2O = L-glutamate + NH4(+). The catalysed reaction is UTP + NH4(+) + ATP = CTP + ADP + phosphate + 2 H(+). Its pathway is pyrimidine metabolism; CTP biosynthesis via de novo pathway; CTP from UDP: step 2/2. With respect to regulation, allosterically activated by GTP, when glutamine is the substrate; GTP has no effect on the reaction when ammonia is the substrate. The allosteric effector GTP functions by stabilizing the protein conformation that binds the tetrahedral intermediate(s) formed during glutamine hydrolysis. Inhibited by the product CTP, via allosteric rather than competitive inhibition. Functionally, catalyzes the ATP-dependent amination of UTP to CTP with either L-glutamine or ammonia as the source of nitrogen. Regulates intracellular CTP levels through interactions with the four ribonucleotide triphosphates. The protein is CTP synthase of Buchnera aphidicola subsp. Acyrthosiphon pisum (strain Tuc7).